The following is a 311-amino-acid chain: HPr kinase/phosphorylase (311 aa).

Active-site residues include His139 and Lys160. Position 154-161 (154-161 (GESGVGKS)) interacts with ATP. Ser161 provides a ligand contact to Mg(2+). Catalysis depends on Asp178, which acts as the Proton acceptor; for phosphorylation activity. Proton donor; for dephosphorylation activity. The segment at 202–211 (IEIRGIGILD) is important for the catalytic mechanism of both phosphorylation and dephosphorylation. Glu203 contributes to the Mg(2+) binding site. Residue Arg244 is part of the active site. Residues 265–270 (PVRPGR) form an important for the catalytic mechanism of dephosphorylation region.

Belongs to the HPrK/P family. Homohexamer. It depends on Mg(2+) as a cofactor.

The catalysed reaction is [HPr protein]-L-serine + ATP = [HPr protein]-O-phospho-L-serine + ADP + H(+). It catalyses the reaction [HPr protein]-O-phospho-L-serine + phosphate + H(+) = [HPr protein]-L-serine + diphosphate. Functionally, catalyzes the ATP- as well as the pyrophosphate-dependent phosphorylation of a specific serine residue in HPr, a phosphocarrier protein of the phosphoenolpyruvate-dependent sugar phosphotransferase system (PTS). HprK/P also catalyzes the pyrophosphate-producing, inorganic phosphate-dependent dephosphorylation (phosphorolysis) of seryl-phosphorylated HPr (P-Ser-HPr). The two antagonistic activities of HprK/P are regulated by several intracellular metabolites, which change their concentration in response to the absence or presence of rapidly metabolisable carbon sources (glucose, fructose, etc.) in the growth medium. Therefore, by controlling the phosphorylation state of HPr, HPrK/P is a sensor enzyme that plays a major role in the regulation of carbon metabolism and sugar transport: it mediates carbon catabolite repression (CCR), and regulates PTS-catalyzed carbohydrate uptake and inducer exclusion. The polypeptide is HPr kinase/phosphorylase (Caldicellulosiruptor bescii (strain ATCC BAA-1888 / DSM 6725 / KCTC 15123 / Z-1320) (Anaerocellum thermophilum)).